The following is a 292-amino-acid chain: Bifunctional protein FolD (292 aa).

Residues 166-168 (GRS), serine 191, and isoleucine 232 contribute to the NADP(+) site.

This sequence belongs to the tetrahydrofolate dehydrogenase/cyclohydrolase family. Homodimer.

The catalysed reaction is (6R)-5,10-methylene-5,6,7,8-tetrahydrofolate + NADP(+) = (6R)-5,10-methenyltetrahydrofolate + NADPH. The enzyme catalyses (6R)-5,10-methenyltetrahydrofolate + H2O = (6R)-10-formyltetrahydrofolate + H(+). The protein operates within one-carbon metabolism; tetrahydrofolate interconversion. Catalyzes the oxidation of 5,10-methylenetetrahydrofolate to 5,10-methenyltetrahydrofolate and then the hydrolysis of 5,10-methenyltetrahydrofolate to 10-formyltetrahydrofolate. The protein is Bifunctional protein FolD of Wolbachia pipientis wMel.